The chain runs to 314 residues: tRNA dimethylallyltransferase (314 aa).

Residue 10–17 (GPTGVGKT) participates in ATP binding. A substrate-binding site is contributed by 12 to 17 (TGVGKT). The segment at 35–38 (DSMQ) is interaction with substrate tRNA.

This sequence belongs to the IPP transferase family. In terms of assembly, monomer. Requires Mg(2+) as cofactor.

It catalyses the reaction adenosine(37) in tRNA + dimethylallyl diphosphate = N(6)-dimethylallyladenosine(37) in tRNA + diphosphate. In terms of biological role, catalyzes the transfer of a dimethylallyl group onto the adenine at position 37 in tRNAs that read codons beginning with uridine, leading to the formation of N6-(dimethylallyl)adenosine (i(6)A). The protein is tRNA dimethylallyltransferase of Finegoldia magna (strain ATCC 29328 / DSM 20472 / WAL 2508) (Peptostreptococcus magnus).